The following is a 285-amino-acid chain: Diphthine methyl ester synthase (285 aa).

S-adenosyl-L-methionine is bound by residues L9, D84, G87, 112 to 113, and L163; that span reads SI. S171 carries the post-translational modification Phosphoserine. S-adenosyl-L-methionine contacts are provided by V225 and H250.

Belongs to the diphthine synthase family.

The enzyme catalyses 2-[(3S)-amino-3-carboxypropyl]-L-histidyl-[translation elongation factor 2] + 4 S-adenosyl-L-methionine = diphthine methyl ester-[translation elongation factor 2] + 4 S-adenosyl-L-homocysteine + 3 H(+). It participates in protein modification; peptidyl-diphthamide biosynthesis. S-adenosyl-L-methionine-dependent methyltransferase that catalyzes four methylations of the modified target histidine residue in translation elongation factor 2 (EF-2), to form an intermediate called diphthine methyl ester. The four successive methylation reactions represent the second step of diphthamide biosynthesis. The chain is Diphthine methyl ester synthase (DPH5) from Homo sapiens (Human).